The primary structure comprises 282 residues: F-actin-capping protein subunit alpha (282 aa).

The protein belongs to the F-actin-capping protein alpha subunit family. In terms of assembly, component of the F-actin capping complex, composed of a heterodimer of an alpha and a beta subunit.

It is found in the cytoplasm. It localises to the cytoskeleton. In terms of biological role, F-actin-capping proteins bind in a Ca(2+)-independent manner to the fast growing ends of actin filaments (barbed end) thereby blocking the exchange of subunits at these ends. Unlike other capping proteins (such as gelsolin and severin), these proteins do not sever actin filaments. In Caenorhabditis elegans, this protein is F-actin-capping protein subunit alpha (cap-1).